A 208-amino-acid chain; its full sequence is MTFNKISSEKGFTQVPLCLRKSKLSNLREYQNRIADIAKRSKAVLGWASTAQFGTDNQFIKDDAARAASILEAARKDPVFAGISDNATAQIATAWASALADYAAAHKSMPRPEILASCHQTLENCLIESTRNSMDATNKAMLESVAAEMMSVSDGVMRLPLFLAMILPVQLGAATADACTFIPVTRDQSDIYEVFNVAGSSFWFLCCW.

In terms of biological role, this protein is thought to be cis acting and to contain the putative attachment site on the DNA for the cellular partition apparatus. This chain is Protein IncB (incB), found in Escherichia coli.